The following is a 243-amino-acid chain: Proteasome subunit beta (243 aa).

The propeptide at 1–49 (MRTPTGDLSDGPAEELGRDQPVFGPEIGEFEHSERRAAQADGEGEMKTG) is removed in mature form; by autocatalysis. The tract at residues 1 to 50 (MRTPTGDLSDGPAEELGRDQPVFGPEIGEFEHSERRAAQADGEGEMKTGT) is disordered. Basic and acidic residues predominate over residues 29–38 (EFEHSERRAA). Threonine 50 serves as the catalytic Nucleophile.

This sequence belongs to the peptidase T1B family. As to quaternary structure, the 20S proteasome core is composed of 14 alpha and 14 beta subunits that assemble into four stacked heptameric rings, resulting in a barrel-shaped structure. The two inner rings, each composed of seven catalytic beta subunits, are sandwiched by two outer rings, each composed of seven alpha subunits. The catalytic chamber with the active sites is on the inside of the barrel. Has a gated structure, the ends of the cylinder being occluded by the N-termini of the alpha-subunits. Is capped at one or both ends by the proteasome regulatory ATPase, PAN.

The protein resides in the cytoplasm. The enzyme catalyses Cleavage of peptide bonds with very broad specificity.. The formation of the proteasomal ATPase PAN-20S proteasome complex, via the docking of the C-termini of PAN into the intersubunit pockets in the alpha-rings, triggers opening of the gate for substrate entry. Interconversion between the open-gate and close-gate conformations leads to a dynamic regulation of the 20S proteasome proteolysis activity. Functionally, component of the proteasome core, a large protease complex with broad specificity involved in protein degradation. The protein is Proteasome subunit beta of Halorubrum lacusprofundi (strain ATCC 49239 / DSM 5036 / JCM 8891 / ACAM 34).